A 137-amino-acid chain; its full sequence is MLQPKRTKFRKQQKGRNYGLASRGNAVSFGEYGLKAVTRGPITARQIEAGRRAINRHVKRGGKVWIRVFPDKPITAKPLEVRQGKGKGNVDHWAFPVQPGRVLYEIEGVSEELAREAFRRAAAKLPVRTTFVQRTVL.

This sequence belongs to the universal ribosomal protein uL16 family. As to quaternary structure, part of the 50S ribosomal subunit.

In terms of biological role, binds 23S rRNA and is also seen to make contacts with the A and possibly P site tRNAs. In Alkalilimnicola ehrlichii (strain ATCC BAA-1101 / DSM 17681 / MLHE-1), this protein is Large ribosomal subunit protein uL16.